A 57-amino-acid chain; its full sequence is Potassium channel toxin gamma-KTx 2.1 (57 aa).

The first 21 residues, 1–21, serve as a signal peptide directing secretion; sequence MKISFVLLLTLFICSIGWSEA. 3 disulfide bridges follow: Cys-28–Cys-49, Cys-34–Cys-54, and Cys-38–Cys-56.

The protein belongs to the short scorpion toxin superfamily. Potassium channel inhibitor family. Gamma-KTx 2 subfamily. In terms of tissue distribution, expressed by the venom gland.

The protein resides in the secreted. Functionally, blocks human and/or rat Kv11.1/KCNH2/ERG1, Kv11.2/KCNH6/ERG2 and Kv11.3/KCNH7/ERG3 by binding to channel outer vestibule (S5P domain) with a 1:1 stoichiometry. Inhibition data are the following: hERG1 (reversible, Kd=7.7 nM, IC(50)=3.3 nM, IC(50)=11.9 nM), rERG1 (reversible, Kd=19 nM), hERG2 (reversible, Kd=77 nM), rERG2 (irreversible, Kd=4.2 nM), hERG3 (reversible, Kd=11.5 nM) and rERG3 (reversible, Kd=747 nM) potassium channels. Also has a minimal effect on rat ELK1/KCNH4 potassium channels (9% inhibition at 100 nM). Both this toxin and CnErgTx1 (AC Q86QT3) share mechanism of action and have overlapping binding sites on ERG1. The potency of these two toxins is not affected by elevating potassium ion concentration from 2 to 98 mM. In addition, at high toxin concentrations, block of ERG1 macroscopic currents by these two toxins is incomplete (88%). The blockade by this toxin is preferentially closed channel state-dependent, with a component of open, but not inactive state-dependent blockade. This toxin produces a concentration-dependent prolongation of QTc in the isolated rabbit heart (16.3% at 100 nM). The polypeptide is Potassium channel toxin gamma-KTx 2.1 (Mesobuthus eupeus (Lesser Asian scorpion)).